The following is a 271-amino-acid chain: MTYLQESSRPAVTVPKLQAMRDAGEKIAMLTCYDASFAALLDRSGVDVLLIGDSLGNVLQGHTTTLPVSLDDIAYHTACVARAQPRALIIADLPFGTYGTPAEAFASAVKLMRAGAQMIKLEGGEWLAETIRFLVERAVPVCAHVGLTPQSVHAFGGFKVQGKTEAGAAQLLRDARAVEDAGAQLVVLEAVPTLVASEVTHMLKIPTIGIGAGTDCSGQVLVLHDMLGIFPGKRPRFVKDFMQGQPTIQAAVEAYVRAVKDSSFPGPEHSF.

Residues Asp-53 and Asp-92 each coordinate Mg(2+). 3-methyl-2-oxobutanoate contacts are provided by residues 53 to 54 (DS), Asp-92, and Lys-120. Glu-122 contributes to the Mg(2+) binding site. Glu-189 (proton acceptor) is an active-site residue.

Belongs to the PanB family. As to quaternary structure, homodecamer; pentamer of dimers. Requires Mg(2+) as cofactor.

It is found in the cytoplasm. It catalyses the reaction 3-methyl-2-oxobutanoate + (6R)-5,10-methylene-5,6,7,8-tetrahydrofolate + H2O = 2-dehydropantoate + (6S)-5,6,7,8-tetrahydrofolate. Its pathway is cofactor biosynthesis; (R)-pantothenate biosynthesis; (R)-pantoate from 3-methyl-2-oxobutanoate: step 1/2. In terms of biological role, catalyzes the reversible reaction in which hydroxymethyl group from 5,10-methylenetetrahydrofolate is transferred onto alpha-ketoisovalerate to form ketopantoate. This is 3-methyl-2-oxobutanoate hydroxymethyltransferase 1 from Burkholderia ambifaria (strain ATCC BAA-244 / DSM 16087 / CCUG 44356 / LMG 19182 / AMMD) (Burkholderia cepacia (strain AMMD)).